Here is a 134-residue protein sequence, read N- to C-terminus: Small ribosomal subunit protein uS9 (134 aa).

A compositionally biased stretch (basic and acidic residues) spans 98–114 (SKQELKSHGFLTRDPRK). Positions 98–134 (SKQELKSHGFLTRDPRKKERKKYGHKKARKSFQFSKR) are disordered. The segment covering 115–134 (KERKKYGHKKARKSFQFSKR) has biased composition (basic residues).

This sequence belongs to the universal ribosomal protein uS9 family.

The protein is Small ribosomal subunit protein uS9 of Chlamydia caviae (strain ATCC VR-813 / DSM 19441 / 03DC25 / GPIC) (Chlamydophila caviae).